Consider the following 488-residue polypeptide: MSFNHKTIEELHDLLVAKEISATELTQKTLEDIKSREEAVGSFITVSEEAALKQAAAIDAKGIDADNLMSGIPLAVKDNISTKGILTTAASKMLYNYEPIFDATSVANAYAKDMIVIGKTNMDEFAMGGSTETSYFKKTKNAWDHTKVPGGSSGGSATAVASGQVRLSLGSDTGGSIRQPAAFNGVVGLKPTYGTVSRYGLIAFGSSLDQIGPFAPTVKENAQLLNVIASSDVKDATSAPVRIADYTSKIGRDIKGMKIALPKEYLGEGIDPEIKETVLAAAKQFEALGATVEEVSLPHSKYGVAVYYIIASSEASSNLQRFDGIRYGFRADDAKNLDEIYVNTRSQGFGDEVKRRIMLGTFSLSSGYYDAYFKKAGQVRTLIIEDFDKVFADYDLILGPTTPTVAFGLDTLNHDPVAMYLADLLTIPVNLAGLPGISIPAGFVDGLPVGLQLIGPKYTEETIYQAAAAFEAVTDYHKQQPIIFGGDK.

Residues K77 and S152 each act as charge relay system in the active site. S176 (acyl-ester intermediate) is an active-site residue.

This sequence belongs to the amidase family. GatA subfamily. Heterotrimer of A, B and C subunits.

It catalyses the reaction L-glutamyl-tRNA(Gln) + L-glutamine + ATP + H2O = L-glutaminyl-tRNA(Gln) + L-glutamate + ADP + phosphate + H(+). Allows the formation of correctly charged Gln-tRNA(Gln) through the transamidation of misacylated Glu-tRNA(Gln) in organisms which lack glutaminyl-tRNA synthetase. The reaction takes place in the presence of glutamine and ATP through an activated gamma-phospho-Glu-tRNA(Gln). This Streptococcus pyogenes serotype M4 (strain MGAS10750) protein is Glutamyl-tRNA(Gln) amidotransferase subunit A.